Consider the following 343-residue polypeptide: Probable dual-specificity RNA methyltransferase RlmN (343 aa).

The active-site Proton acceptor is the E83. The Radical SAM core domain occupies 89–323 (YLDRKTICVS…VSVRRSRGKD (235 aa)). C96 and C328 are disulfide-bonded. [4Fe-4S] cluster contacts are provided by C103, C107, and C110. Residues 153 to 154 (GE), S185, 209 to 211 (SLH), and N285 contribute to the S-adenosyl-L-methionine site. The active-site S-methylcysteine intermediate is C328.

This sequence belongs to the radical SAM superfamily. RlmN family. It depends on [4Fe-4S] cluster as a cofactor.

It is found in the cytoplasm. It catalyses the reaction adenosine(2503) in 23S rRNA + 2 reduced [2Fe-2S]-[ferredoxin] + 2 S-adenosyl-L-methionine = 2-methyladenosine(2503) in 23S rRNA + 5'-deoxyadenosine + L-methionine + 2 oxidized [2Fe-2S]-[ferredoxin] + S-adenosyl-L-homocysteine. The enzyme catalyses adenosine(37) in tRNA + 2 reduced [2Fe-2S]-[ferredoxin] + 2 S-adenosyl-L-methionine = 2-methyladenosine(37) in tRNA + 5'-deoxyadenosine + L-methionine + 2 oxidized [2Fe-2S]-[ferredoxin] + S-adenosyl-L-homocysteine. In terms of biological role, specifically methylates position 2 of adenine 2503 in 23S rRNA and position 2 of adenine 37 in tRNAs. This Deinococcus deserti (strain DSM 17065 / CIP 109153 / LMG 22923 / VCD115) protein is Probable dual-specificity RNA methyltransferase RlmN.